The sequence spans 450 residues: UDP-N-acetylmuramate--L-alanine ligase (450 aa).

112-118 (GTHGKTT) contacts ATP.

Belongs to the MurCDEF family.

It localises to the cytoplasm. It catalyses the reaction UDP-N-acetyl-alpha-D-muramate + L-alanine + ATP = UDP-N-acetyl-alpha-D-muramoyl-L-alanine + ADP + phosphate + H(+). Its pathway is cell wall biogenesis; peptidoglycan biosynthesis. In terms of biological role, cell wall formation. This is UDP-N-acetylmuramate--L-alanine ligase from Endomicrobium trichonymphae.